A 171-amino-acid chain; its full sequence is Cation channel sperm-associated auxiliary subunit TMEM249 (171 aa).

Topologically, residues 1–2 (ML) are cytoplasmic. The chain crosses the membrane as a helical span at residues 3-17 (FIICLVFISCNVLRE). The Extracellular segment spans residues 18–28 (VKYQETWCFPA). A helical membrane pass occupies residues 29–40 (YGMVIGLWLMLS). The Cytoplasmic segment spans residues 41–171 (SIPQRRLVLN…TKSSVNDLDV (131 aa)).

In terms of assembly, component of the CatSper complex or CatSpermasome composed of the core pore-forming members CATSPER1, CATSPER2, CATSPER3 and CATSPER4 as well as auxiliary members CATSPERB, CATSPERG2, CATSPERD, CATSPERE, CATSPERZ, C2CD6/CATSPERT, SLCO6C1, TMEM249, TMEM262 and EFCAB9. HSPA1 may be an additional auxiliary complex member. The core complex members CATSPER1, CATSPER2, CATSPER3 and CATSPER4 form a heterotetrameric channel. The auxiliary CATSPERB, CATSPERG2, CATSPERD and CATSPERE subunits form a pavilion-like structure over the pore which stabilizes the complex through interactions with CATSPER4, CATSPER3, CATSPER1 and CATSPER2 respectively. SLCO6C1 interacts with CATSPERE and TMEM262/CATSPERH interacts with CATSPERB, further stabilizing the complex. C2CD6/CATSPERT interacts at least with CATSPERD and is required for targeting the CatSper complex in the flagellar membrane.

Its subcellular location is the cell projection. It is found in the cilium. The protein localises to the flagellum membrane. Its function is as follows. Auxiliary component of the CatSper complex, a complex involved in sperm cell hyperactivation. The polypeptide is Cation channel sperm-associated auxiliary subunit TMEM249 (Mus musculus (Mouse)).